We begin with the raw amino-acid sequence, 681 residues long: DNA ligase (681 aa).

Residues 45–49 (DFDFD), 94–95 (SL), and E120 each bind NAD(+). K122 serves as the catalytic N6-AMP-lysine intermediate. NAD(+) contacts are provided by R143, E177, K289, and K313. The Zn(2+) site is built by C403, C406, C421, and C426. The BRCT domain maps to 593-681 (ADQQPFAGQS…SLKIDFKNLI (89 aa)).

It belongs to the NAD-dependent DNA ligase family. LigA subfamily. The cofactor is Mg(2+). It depends on Mn(2+) as a cofactor.

It carries out the reaction NAD(+) + (deoxyribonucleotide)n-3'-hydroxyl + 5'-phospho-(deoxyribonucleotide)m = (deoxyribonucleotide)n+m + AMP + beta-nicotinamide D-nucleotide.. In terms of biological role, DNA ligase that catalyzes the formation of phosphodiester linkages between 5'-phosphoryl and 3'-hydroxyl groups in double-stranded DNA using NAD as a coenzyme and as the energy source for the reaction. It is essential for DNA replication and repair of damaged DNA. This Leptospira interrogans serogroup Icterohaemorrhagiae serovar Lai (strain 56601) protein is DNA ligase.